The chain runs to 504 residues: Biotinidase (504 aa).

An N-terminal signal peptide occupies residues 1-20; sequence MFSFGTVFTFALLLIPLTEA. The 280-residue stretch at 30–309 folds into the CN hydrolase domain; the sequence is YEHNLILNPD…GRLLVARVPV (280 aa). Catalysis depends on Glu79, which acts as the Proton acceptor. Residues Asn86 and Asn117 are each glycosylated (N-linked (GlcNAc...) asparagine). The active-site Proton donor is Lys181. The active-site Nucleophile is the Cys214. N-linked (GlcNAc...) asparagine glycosylation is found at Asn261, Asn365, and Asn375.

The protein belongs to the carbon-nitrogen hydrolase superfamily. BTD/VNN family.

Its subcellular location is the secreted. It localises to the extracellular space. The catalysed reaction is biocytin + H2O = biotin + L-lysine. It carries out the reaction biotin amide + H2O = biotin + NH4(+). Its function is as follows. Catalytic release of biotin from biocytin, the product of biotin-dependent carboxylases degradation. The polypeptide is Biotinidase (btd) (Takifugu rubripes (Japanese pufferfish)).